The chain runs to 501 residues: Sarpagan bridge enzyme (501 aa).

The helical; Signal-anchor for type II membrane protein transmembrane segment at 3–23 (VMQLSFSYPALFLFVFFLFML) threads the bilayer. C441 serves as a coordination point for heme.

Belongs to the cytochrome P450 family. Heme is required as a cofactor. In terms of tissue distribution, highly expressed in roots. Expressed at low levels in stems.

The protein localises to the endoplasmic reticulum membrane. It carries out the reaction (19E)-geissoschizine + reduced [NADPH--hemoprotein reductase] + O2 = polyneuridine aldehyde + oxidized [NADPH--hemoprotein reductase] + 2 H2O + H(+). The enzyme catalyses tetrahydroalstonine + A + reduced [NADPH--hemoprotein reductase] + O2 = alstonine + AH2 + oxidized [NADPH--hemoprotein reductase] + 2 H2O + H(+). It catalyses the reaction ajmalicine + A + reduced [NADPH--hemoprotein reductase] + O2 = serpentine + AH2 + oxidized [NADPH--hemoprotein reductase] + 2 H2O + H(+). Its pathway is alkaloid biosynthesis; ajmaline biosynthesis. In terms of biological role, monooxygenase involved in the biosynthesis of ajmaline-type monoterpenoid indole alkaloids (MIAs) natural products, important plant-derived pharmaceuticals used in the therapy of heart disorders. Converts by cyclization the strictosidine-derived geissoschizine to the sarpagan alkaloid polyneuridine aldehyde, precursor of vomilenine, an intermediate chemical in the biosynthesis of ajmaline. Converts by aromatization the tetrahydro-beta-carboline alkaloids tetrahydroalstonine and ajmalicine to the corresponding beta-carboline alkaloids alstonine and serpentine, respectively. This Gelsemium sempervirens (Carolina jasmine) protein is Sarpagan bridge enzyme.